The chain runs to 135 residues: Interleukin-5 (135 aa).

Positions 1–19 (MRVLLQLGLLALGAVCVCA) are cleaved as a signal peptide. Asn48, Asn77, and Asn91 each carry an N-linked (GlcNAc...) asparagine glycan.

It belongs to the IL-5 family. As to quaternary structure, homodimer; disulfide-linked. Interacts with IL5RA. Interacts with CSF2RB.

It is found in the secreted. Homodimeric cytokine expressed predominantly by T-lymphocytes and NK cells that plays an important role in the survival, differentiation, and chemotaxis of eosinophils. Also acts on activated and resting B-cells to induce immunoglobulin production, growth, and differentiation. Mechanistically, exerts its biological effects through a receptor composed of IL5RA subunit and the cytokine receptor common subunit beta/CSF2RB. Binding to the receptor leads to activation of various kinases including LYN, SYK and JAK2 and thereby propagates signals through the RAS-MAPK and JAK-STAT5 pathways respectively. The chain is Interleukin-5 (IL5) from Cavia porcellus (Guinea pig).